Reading from the N-terminus, the 210-residue chain is MADS-box protein AeAP3-2 (210 aa).

An MADS-box domain is found at 1–36 (GGLLKKARELAILCDAQLGVIIFSSSGKMFEFSSPP). The 91-residue stretch at 59-149 (NQQVYCEITR…YRVIQDHHAA (91 aa)) folds into the K-box domain.

Expressed exclusively in the carpel.

The protein localises to the nucleus. Functionally, probable transcription factor. This chain is MADS-box protein AeAP3-2 (AP3-2), found in Asarum europaeum (Asarabacca).